The sequence spans 131 residues: Profilin-10 (131 aa).

Cys-13 and Cys-115 are joined by a disulfide. The Involved in PIP2 interaction signature appears at 81–97 (AVIRGKKGSGGITVKKT). Thr-111 bears the Phosphothreonine mark.

Belongs to the profilin family. Occurs in many kinds of cells as a complex with monomeric actin in a 1:1 ratio. In terms of processing, phosphorylated by MAP kinases.

It is found in the cytoplasm. The protein localises to the cytoskeleton. Its function is as follows. Binds to actin and affects the structure of the cytoskeleton. At high concentrations, profilin prevents the polymerization of actin, whereas it enhances it at low concentrations. This is Profilin-10 from Zea mays (Maize).